We begin with the raw amino-acid sequence, 318 residues long: MPMQGAQRKLLGSLNSTPTATSNLGLAANRTGAPCLELPIPNGLFLSLGLVSLVENVLVVAAIAKNRNLHSSMYCFICCLALSDLLVSGSNMLETAVILLLEAGVLATRASVVQQLHNTIDVLTCSSMLCSLCFLGAIAVDRYISIFYALRYHSIMTLPRAQRAVAAIWVASVLSSTLFITYYDHAAVLLCLMVFFLAMLVLMAVLYVHMLARARQHAQGIIRLHKRQPPAHKGFGLRGAATLTILLGIFFLCWGPFFLCLTLVVFCPQHLTCNCIFKNFKVFLTLIICNTIIDPLIYAFRSQELRRMLKEVLGRGRW.

Residues 1 to 37 (MPMQGAQRKLLGSLNSTPTATSNLGLAANRTGAPCLE) are Extracellular-facing. N-linked (GlcNAc...) asparagine glycosylation is present at Asn-29. The chain crosses the membrane as a helical span at residues 38-63 (LPIPNGLFLSLGLVSLVENVLVVAAI). At 64–72 (AKNRNLHSS) the chain is on the cytoplasmic side. The helical transmembrane segment at 73–93 (MYCFICCLALSDLLVSGSNML) threads the bilayer. Residues 94 to 118 (ETAVILLLEAGVLATRASVVQQLHN) lie on the Extracellular side of the membrane. The helical transmembrane segment at 119-140 (TIDVLTCSSMLCSLCFLGAIAV) threads the bilayer. The Cytoplasmic portion of the chain corresponds to 141 to 163 (DRYISIFYALRYHSIMTLPRAQR). Residues 164 to 183 (AVAAIWVASVLSSTLFITYY) form a helical membrane-spanning segment. Residues 184 to 191 (DHAAVLLC) are Extracellular-facing. The helical transmembrane segment at 192 to 211 (LMVFFLAMLVLMAVLYVHML) threads the bilayer. Residues 212–240 (ARARQHAQGIIRLHKRQPPAHKGFGLRGA) are Cytoplasmic-facing. A helical transmembrane segment spans residues 241–266 (ATLTILLGIFFLCWGPFFLCLTLVVF). The Extracellular portion of the chain corresponds to 267–279 (CPQHLTCNCIFKN). A helical membrane pass occupies residues 280–300 (FKVFLTLIICNTIIDPLIYAF). Topologically, residues 301–317 (RSQELRRMLKEVLGRGR) are cytoplasmic.

Belongs to the G-protein coupled receptor 1 family. As to quaternary structure, interacts with MGRN1, but does not undergo MGRN1-mediated ubiquitination; this interaction competes with GNAS-binding and thus inhibits agonist-induced cAMP production. Interacts with OPN3; the interaction results in a decrease in MC1R-mediated cAMP signaling and ultimately a decrease in melanin production in melanocytes.

It is found in the cell membrane. Receptor for MSH (alpha, beta and gamma) and ACTH. The activity of this receptor is mediated by G proteins which activate adenylate cyclase. Mediates melanogenesis, the production of eumelanin (black/brown) and phaeomelanin (red/yellow), via regulation of cAMP signaling in melanocytes. This is Melanocyte-stimulating hormone receptor (MC1R) from Leontopithecus rosalia (Golden lion tamarin).